The chain runs to 628 residues: LRR receptor kinase SERK2 (628 aa).

The first 31 residues, 1 to 31, serve as a signal peptide directing secretion; the sequence is MAEARLLRRRRLCLAVPFVWVVAVAVSRVGA. 4 LRR repeats span residues 97 to 121, 123 to 144, 145 to 169, and 170 to 194; these read LKNLQYLELYSNNISGTIPNELGNL, NLVSLDLYLNNFTGFIPETLGQ, LYKLRFLRLNNNSLSGSIPKSLTNI, and TTLQVLDLSNNNLSGEVPSTGSFSL. 6 N-linked (GlcNAc...) asparagine glycosylation sites follow: Asn109, Asn120, Asn133, Asn155, Asn168, and Asn181. A helical transmembrane segment spans residues 243-263; sequence AIAGGVAAAAALLFAVPAIGF. Thr303 bears the Phosphothreonine mark. The Protein kinase domain occupies 306–593; it reads FSNKNILGRG…GLAERWEEWQ (288 aa). Residue 312–320 participates in ATP binding; it reads LGRGGFGKV. The residue at position 329 (Ser329) is a Phosphoserine. Lys334 provides a ligand contact to ATP. The residue at position 350 (Thr350) is a Phosphothreonine. Residues Ser356 and Ser387 each carry the phosphoserine modification. Residue Asp433 is the Proton acceptor of the active site. Residues Thr463, Thr466, and Thr472 each carry the phosphothreonine modification. Position 615 is a phosphoserine (Ser615). Thr616 bears the Phosphothreonine mark. At Ser625 the chain carries Phosphoserine.

It belongs to the protein kinase superfamily. Ser/Thr protein kinase family. As to quaternary structure, interacts with BRI1. Interacts with XA21, XA26/XA3 and FLS2. Post-translationally, autophosphorylated on serine and threonine residues. As to expression, expressed in flag leaves. Expressed in roots, shoot apex, leaf blades, leaf sheaths, panicles and flowers. Expressed leaves, stems, sheaths and flowers.

It is found in the cell membrane. The enzyme catalyses L-seryl-[protein] + ATP = O-phospho-L-seryl-[protein] + ADP + H(+). The catalysed reaction is L-threonyl-[protein] + ATP = O-phospho-L-threonyl-[protein] + ADP + H(+). LRR receptor kinase involved in positive regulation of somatic embryogenesis and defense response against the rice blast fungus pathogen Magnaporthe oryzae. Involved in the positive regulation of receptor kinase-mediated immunity. Required for immunity mediated by the LRR receptor kinases XA21 and XA26/XA3 which recognize effectors from the bacterial pathogen Xanthomonas oryzae pv. oryzae (Xoo). Required for the immune response mediated by the LRR receptor kinase FLS2 which recognizes specifically the bacterial flagellin (flg22) effector. Kinase activity and direct interaction with the immune receptors is critical for their function. Involved in the regulation of plant growth through the brassinosteroid (BR) signaling pathway. This is LRR receptor kinase SERK2 from Oryza sativa subsp. japonica (Rice).